Reading from the N-terminus, the 211-residue chain is Interleukin-6 (211 aa).

The signal sequence occupies residues 1 to 24 (MKFLSARDFQPVAFLGLMLLTATA). Cysteines 70 and 76 form a disulfide. A Phosphoserine modification is found at serine 79. Cysteine 99 and cysteine 109 form a disulfide bridge.

Belongs to the IL-6 superfamily. As to quaternary structure, component of a hexamer of two molecules each of IL6, IL6R and IL6ST; first binds to IL6R to associate with the signaling subunit IL6ST. Interacts with IL6R (via the N-terminal ectodomain); this interaction may be affected by IL6R-binding with SORL1, hence decreasing IL6 cis signaling. Interacts with SORL1 (via the N-terminal ectodomain); this interaction leads to IL6 internalization and lysosomal degradation. May form a trimeric complex with the soluble SORL1 ectodomain and soluble IL6R receptor; this interaction might stabilize circulating IL6, hence promoting IL6 trans signaling.

It is found in the secreted. Its function is as follows. Cytokine with a wide variety of biological functions in immunity, tissue regeneration, and metabolism. Binds to IL6R, then the complex associates to the signaling subunit IL6ST/gp130 to trigger the intracellular IL6-signaling pathway. The interaction with the membrane-bound IL6R and IL6ST stimulates 'classic signaling', whereas the binding of IL6 and soluble IL6R to IL6ST stimulates 'trans-signaling'. Alternatively, 'cluster signaling' occurs when membrane-bound IL6:IL6R complexes on transmitter cells activate IL6ST receptors on neighboring receiver cells. Functionally, IL6 is a potent inducer of the acute phase response. Rapid production of IL6 contributes to host defense during infection and tissue injury, but excessive IL6 synthesis is involved in disease pathology. In the innate immune response, is synthesized by myeloid cells, such as macrophages and dendritic cells, upon recognition of pathogens through toll-like receptors (TLRs) at the site of infection or tissue injury. In the adaptive immune response, is required for the differentiation of B-cells into immunoglolin-secreting cells. Plays a major role in the differentiation of CD4(+) T cell subsets. Essential factor for the development of T follicular helper (Tfh) cells that are required for the induction of germinal-center formation. Together with IL21, controls the early generation of Tfh cells and are critical for an effective antibody response to acute viral infection. Required to drive naive CD4(+) T cells to the Th17 lineage, through 'cluster signaling' by dendritic cells. Also required for proliferation of myeloma cells and the survival of plasmablast cells. In terms of biological role, acts as an essential factor in bone homeostasis and on vessels directly or indirectly by induction of VEGF, resulting in increased angiogenesis activity and vascular permeability. Induces, through 'trans-signaling' and synergistically with IL1B and TNF, the production of VEGF. Involved in metabolic controls, is discharged into the bloodstream after muscle contraction increasing lipolysis and improving insulin resistance. 'Trans-signaling' in central nervous system regulates energy and glucose homeostasis. Mediates, through GLP-1, crosstalk between insulin-sensitive tissues, intestinal L cells and pancreatic islets to adapt to changes in insulin demand. Also acts as a myokine. Plays a protective role during liver injury, being required for maintenance of tissue regeneration. Also has a pivotal role in iron metabolism by regulating HAMP/hepcidin expression upon inflammation or bacterial infection. Through activation of IL6ST-YAP-NOTCH pathway, induces inflammation-induced epithelial regeneration. The sequence is that of Interleukin-6 from Rattus norvegicus (Rat).